Reading from the N-terminus, the 226-residue chain is Uracil-DNA glycosylase (226 aa).

Asp65 serves as the catalytic Proton acceptor.

This sequence belongs to the uracil-DNA glycosylase (UDG) superfamily. UNG family.

Its subcellular location is the cytoplasm. The catalysed reaction is Hydrolyzes single-stranded DNA or mismatched double-stranded DNA and polynucleotides, releasing free uracil.. Its function is as follows. Excises uracil residues from the DNA which can arise as a result of misincorporation of dUMP residues by DNA polymerase or due to deamination of cytosine. The sequence is that of Uracil-DNA glycosylase from Bacillus pumilus (strain SAFR-032).